A 293-amino-acid polypeptide reads, in one-letter code: Amine sulfotransferase (293 aa).

46–51 (KSGTIW) contacts 3'-phosphoadenylyl sulfate. Histidine 101 functions as the Proton acceptor in the catalytic mechanism. 3'-phosphoadenylyl sulfate contacts are provided by residues arginine 123, serine 131, 220–225 (ATFQKM), and 252–254 (RKG).

This sequence belongs to the sulfotransferase 1 family.

It is found in the cytoplasm. It catalyses the reaction a primary amine + 3'-phosphoadenylyl sulfate = a sulfamate + adenosine 3',5'-bisphosphate + 2 H(+). In terms of biological role, sulfotransferase that utilizes 3'-phospho-5'-adenylyl sulfate (PAPS) as sulfonate donor to catalyze the N-sulfonation of amines. This chain is Amine sulfotransferase (Sult3a1), found in Mus musculus (Mouse).